Reading from the N-terminus, the 301-residue chain is Homoserine O-acetyltransferase (301 aa).

The Acyl-thioester intermediate role is filled by C142. 2 residues coordinate substrate: K163 and S192. H235 serves as the catalytic Proton acceptor. E237 is an active-site residue. Substrate is bound at residue R249.

It belongs to the MetA family.

It is found in the cytoplasm. The catalysed reaction is L-homoserine + acetyl-CoA = O-acetyl-L-homoserine + CoA. It functions in the pathway amino-acid biosynthesis; L-methionine biosynthesis via de novo pathway; O-acetyl-L-homoserine from L-homoserine: step 1/1. In terms of biological role, transfers an acetyl group from acetyl-CoA to L-homoserine, forming acetyl-L-homoserine. The sequence is that of Homoserine O-acetyltransferase from Bacillus thuringiensis subsp. konkukian (strain 97-27).